Here is a 344-residue protein sequence, read N- to C-terminus: Uroporphyrinogen decarboxylase (344 aa).

Residues 29 to 33 (RQAGR), D79, Y153, S208, and H324 contribute to the substrate site.

This sequence belongs to the uroporphyrinogen decarboxylase family. Homodimer.

The protein localises to the cytoplasm. The catalysed reaction is uroporphyrinogen III + 4 H(+) = coproporphyrinogen III + 4 CO2. It participates in porphyrin-containing compound metabolism; protoporphyrin-IX biosynthesis; coproporphyrinogen-III from 5-aminolevulinate: step 4/4. Functionally, catalyzes the decarboxylation of four acetate groups of uroporphyrinogen-III to yield coproporphyrinogen-III. The protein is Uroporphyrinogen decarboxylase of Rhizorhabdus wittichii (strain DSM 6014 / CCUG 31198 / JCM 15750 / NBRC 105917 / EY 4224 / RW1) (Sphingomonas wittichii).